Consider the following 98-residue polypeptide: N(2)-fixation sustaining protein CowN (98 aa).

It belongs to the CowN family.

In terms of biological role, is required to sustain N(2)-dependent growth in the presence of low levels of carbon monoxide (CO). Probably acts by protecting the N(2) fixation ability of the nitrogenase complex, which is inactivated in the presence of CO. The polypeptide is N(2)-fixation sustaining protein CowN (Paramagnetospirillum magneticum (strain ATCC 700264 / AMB-1) (Magnetospirillum magneticum)).